Here is a 396-residue protein sequence, read N- to C-terminus: Elongation factor Tu (396 aa).

One can recognise a tr-type G domain in the interval 10–206 (KPHVNVGTIG…VLDTYIPEPE (197 aa)). The segment at 19–26 (GHVDHGKT) is G1. 19 to 26 (GHVDHGKT) serves as a coordination point for GTP. Residue Thr26 participates in Mg(2+) binding. The G2 stretch occupies residues 60-64 (GITIN). The G3 stretch occupies residues 81 to 84 (DCPG). Residues 81–85 (DCPGH) and 136–139 (NKCD) contribute to the GTP site. Positions 136–139 (NKCD) are G4. The interval 174–176 (SAT) is G5.

It belongs to the TRAFAC class translation factor GTPase superfamily. Classic translation factor GTPase family. EF-Tu/EF-1A subfamily. In terms of assembly, monomer.

It localises to the cytoplasm. It carries out the reaction GTP + H2O = GDP + phosphate + H(+). Its function is as follows. GTP hydrolase that promotes the GTP-dependent binding of aminoacyl-tRNA to the A-site of ribosomes during protein biosynthesis. The polypeptide is Elongation factor Tu (Psychrobacter arcticus (strain DSM 17307 / VKM B-2377 / 273-4)).